The following is a 29-amino-acid chain: Varv peptide A (29 aa).

The cyclopeptide (Gly-Asn) cross-link spans 1–29 (GLPVCGETCVGGTCNTPGCSCSWPVCTRN). 3 cysteine pairs are disulfide-bonded: Cys5–Cys19, Cys9–Cys21, and Cys14–Cys26.

Post-translationally, this is a cyclic peptide.

Probably participates in a plant defense mechanism. Has cytotoxic activity against a variety of drug-resistant and drug-sensitive human tumor cell lines, and against primary chronic lymphocytic leukemia cells. Has weak cytotoxic activity against primary ovarian carcinoma cells or normal lymphocytes. The sequence is that of Varv peptide A from Viola arvensis (European field pansy).